We begin with the raw amino-acid sequence, 230 residues long: Large ribosomal subunit protein uL1 (230 aa).

This sequence belongs to the universal ribosomal protein uL1 family. In terms of assembly, part of the 50S ribosomal subunit.

Functionally, binds directly to 23S rRNA. The L1 stalk is quite mobile in the ribosome, and is involved in E site tRNA release. Its function is as follows. Protein L1 is also a translational repressor protein, it controls the translation of the L11 operon by binding to its mRNA. This Nitrosomonas europaea (strain ATCC 19718 / CIP 103999 / KCTC 2705 / NBRC 14298) protein is Large ribosomal subunit protein uL1.